We begin with the raw amino-acid sequence, 1085 residues long: Ubiquitin carboxyl-terminal hydrolase 36 (1085 aa).

Residues G23–A36 show a composition bias toward low complexity. Disordered stretches follow at residues G23–Q47 and K104–K149. The USP domain maps to T173–D481. C182 (nucleophile) is an active-site residue. Catalysis depends on H440, which acts as the Proton acceptor. 4 disordered regions span residues A489–K730, K745–K888, E963–Q1030, and K1043–S1085. Low complexity predominate over residues S503–T518. Phosphoserine is present on residues S514 and S516. Residues G532–A542 are compositionally biased toward polar residues. Residues N588–N609 are compositionally biased toward low complexity. Residues M642 to K651 show a composition bias toward basic and acidic residues. 2 positions are modified to phosphothreonine: T660 and T664. S674 and S676 each carry phosphoserine. Positions T705 to K730 are enriched in polar residues. At S749 the chain carries Phosphoserine. Over residues S749–S758 the composition is skewed to acidic residues. A compositionally biased stretch (low complexity) spans P768 to A778. Pro residues predominate over residues P779–P788. S781 bears the Phosphoserine mark. Residue T784 is modified to Phosphothreonine. Residue S787 is modified to Phosphoserine. Residues E805–E818 are compositionally biased toward acidic residues. Residues K822–P844 are compositionally biased toward polar residues. T825 carries the post-translational modification Phosphothreonine. Position 843 is a phosphoserine (S843). Residue T846 is modified to Phosphothreonine. Residues P859 to N884 show a composition bias toward polar residues. 2 stretches are compositionally biased toward low complexity: residues S987–S998 and Q1056–A1066.

This sequence belongs to the peptidase C19 family. Interacts with atms/PAF1, but not with CycT.

Its subcellular location is the nucleus. It is found in the nucleolus. The catalysed reaction is Thiol-dependent hydrolysis of ester, thioester, amide, peptide and isopeptide bonds formed by the C-terminal Gly of ubiquitin (a 76-residue protein attached to proteins as an intracellular targeting signal).. In terms of biological role, required for maintaining multiple types of adult stem cells, including male and female germline, epithelial follicle cell and intestinal stem cells. May function as a transcriptional repressor by continually deubiquiting histone H2B at the promoters of genes critical for cellular differentiation, thereby preventing histone H3 'Lys-4' trimethylation (H3K4). Controls selective autophagy activation by ubiquitinated proteins. This is Ubiquitin carboxyl-terminal hydrolase 36 (Usp36) from Drosophila erecta (Fruit fly).